The chain runs to 267 residues: tRNA pseudouridine synthase A (267 aa).

Catalysis depends on Asp-51, which acts as the Nucleophile. Tyr-109 is a binding site for substrate.

Belongs to the tRNA pseudouridine synthase TruA family. Homodimer.

The enzyme catalyses uridine(38/39/40) in tRNA = pseudouridine(38/39/40) in tRNA. Functionally, formation of pseudouridine at positions 38, 39 and 40 in the anticodon stem and loop of transfer RNAs. In Staphylococcus aureus (strain Mu3 / ATCC 700698), this protein is tRNA pseudouridine synthase A.